The following is a 908-amino-acid chain: MDFRNSFKSHSSYKQIRSPGDQSEPSPEHLPILHDHHPDHSGMVVDDQKPDSTRSSLDDGRNAPVERDASYKFWQDNTTGTSTDHTAVRTSDKDPIAISRKGDRLSGSFDFVHGKLPVDESPTKMVAGEPVNRQWRGRNNEEITLDVDQENDDVSHQTMPTPTSTARTSFDASREMRVSFNVRRAGGAFVAGSVPSSSSHSSSSSSATMRTNQDQPQLQEEEVVRCTSNMSFQRKSELISRVKTRSRLQDPPREEETPYSGWRSGQLKSGLLADIDEEDDPLAEEDVPDEYKRGKLDAITLLQWLSLVAIIAALACSLSIQSWKKVRVWNLHLWKWEVFLLVLICGRLVSGWGIRIVVFFIERNFLLRKRVLYFVYGVRRAVQNCLWLGLVLLAWHFLFDKKVQRETRSRFLPYVTKILVCFLLSTILWLIKTLVVKVLASSFHVSTYFDRIQEALFNQYVIETLSGPPMIEMSRIEEEEERAQDEIFKMQNAGANLPPDLCAAAFPPGKSGRVMNPKLSPIIPKSTTDNGISMEHLHRMNHKNISAWNMKRLMKIVRNVSLTTLDEQMLESTYEDESTRQIRSEKEAKAAARKIFKNVEQRGAKYIYLEDLMRFLREDEAMKTMGLFEGAPENKRISKSALKNWLVNAFRERRALALTLNDTKTAVNKLHHMINIVTAIVIVVIWLVLLEIASSKVLLFVSSQVVLLAFIFGNTVKTVFESIIFLFIVHPYDVGDRCEIDSVQLVVEEMNILTTVFLRYDNLKIMYPNSLLWQKSINNYYRSPDMGDAIEFCVHITTPLEKISVIKQRISNYIDNKPEYWYPQAKIIVKDLEDLHIVRLAIWPCHRINHQDMAERWTRRAVLVEEVIKILLELDIQHRFYPLDINVRTMPTVVSSRVPPGWSQNQPA.

Residues 1 to 25 (MDFRNSFKSHSSYKQIRSPGDQSEP) show a composition bias toward polar residues. Disordered stretches follow at residues 1–88 (MDFR…HTAV), 148–172 (DQEN…SFDA), 190–221 (VAGS…LQEE), and 242–265 (VKTR…WRSG). Basic and acidic residues predominate over residues 31 to 70 (PILHDHHPDHSGMVVDDQKPDSTRSSLDDGRNAPVERDAS). Composition is skewed to polar residues over residues 75-85 (QDNTTGTSTDH) and 156-171 (HQTM…TSFD). Over residues 196-206 (SSSSHSSSSSS) the composition is skewed to low complexity. The span at 207–218 (ATMRTNQDQPQL) shows a compositional bias: polar residues. A compositionally biased stretch (basic and acidic residues) spans 247–256 (RLQDPPREEE). Transmembrane regions (helical) follow at residues 298–318 (AITL…ACSL), 341–361 (LVLI…VFFI), 381–401 (AVQN…LFDK), 411–431 (FLPY…LWLI), 673–693 (MINI…LEIA), and 709–729 (AFIF…LFIV).

Belongs to the MscS (TC 1.A.23) family. Expressed in tricellular and mature pollen, and in germinating tube. Not detected in leaves or roots.

Its subcellular location is the cell membrane. It is found in the endomembrane system. Its activity is regulated as follows. Not regulated by MgCl(2), ruthenium red or tetramethylammonium-Cl. Mechanosensitive channel that opens in response to stretch forces in the membrane lipid bilayer. Exhibits a 6.3-fold preference for chloride over sodium. Regulates osmotic forces during pollen hydration and germination. This Arabidopsis thaliana (Mouse-ear cress) protein is Mechanosensitive ion channel protein 8.